We begin with the raw amino-acid sequence, 25 residues long: Aggression-stimulating peptide (25 aa).

As to expression, expressed by the skin glands of male frogs.

Its subcellular location is the secreted. Its function is as follows. Stimulates aggressive behavior in male frogs. No effect on female frogs. This is Aggression-stimulating peptide from Leptodactylus fallax (Mountain chicken frog).